A 273-amino-acid polypeptide reads, in one-letter code: Orotidine 5'-phosphate decarboxylase (273 aa).

K96 acts as the Proton donor in catalysis.

This sequence belongs to the OMP decarboxylase family. Type 2 subfamily.

It catalyses the reaction orotidine 5'-phosphate + H(+) = UMP + CO2. The protein operates within pyrimidine metabolism; UMP biosynthesis via de novo pathway; UMP from orotate: step 2/2. The polypeptide is Orotidine 5'-phosphate decarboxylase (Nocardioides sp. (strain ATCC BAA-499 / JS614)).